We begin with the raw amino-acid sequence, 126 residues long: Holo-[acyl-carrier-protein] synthase (126 aa).

The Mg(2+) site is built by D9 and E58.

This sequence belongs to the P-Pant transferase superfamily. AcpS family. Mg(2+) is required as a cofactor.

Its subcellular location is the cytoplasm. The enzyme catalyses apo-[ACP] + CoA = holo-[ACP] + adenosine 3',5'-bisphosphate + H(+). Transfers the 4'-phosphopantetheine moiety from coenzyme A to a Ser of acyl-carrier-protein. The chain is Holo-[acyl-carrier-protein] synthase from Erwinia tasmaniensis (strain DSM 17950 / CFBP 7177 / CIP 109463 / NCPPB 4357 / Et1/99).